Consider the following 415-residue polypeptide: Maltose excess protein 1, chloroplastic (415 aa).

Residues 74 to 93 (SESDSDSDFPHENQQGNPGL) are disordered. 9 consecutive transmembrane segments (helical) span residues 139–159 (ALSA…LSLL), 176–196 (LGVV…AMPI), 199–219 (FVAT…YYFG), 231–251 (DVIT…TFVP), 252–272 (LVPN…AAII), 286–306 (FVGS…PVSQ), 322–342 (SITM…ALFI), 345–365 (LMWL…NILC), and 373–393 (SQSF…LALW).

In terms of tissue distribution, expressed in leaves and roots. Expressed in root cap cells.

The protein resides in the plastid. It is found in the chloroplast inner membrane. Its function is as follows. Probable maltose transporter. Essential for the conversion of starch to sucrose in leaves at night, probably via the export of maltose from the chloroplast. Required for root cap cells formation. The protein is Maltose excess protein 1, chloroplastic (MEX1) of Arabidopsis thaliana (Mouse-ear cress).